Here is a 131-residue protein sequence, read N- to C-terminus: MKFLSTLILLLSVLALVRGEQYNKFTVDLNGVCTNSGSLDTCTNQCGNAGGSFQISQSGGEYQYEQYATKDCDLMASLTSKFACLADEAPVTLGLGNIKITCQDPSNSASSPLTTAVLFVVAFAAAIALLL.

Positions 1-19 (MKFLSTLILLLSVLALVRG) are cleaved as a signal peptide. S106 carries GPI-like-anchor amidated serine lipidation. The propeptide at 107–131 (NSASSPLTTAVLFVVAFAAAIALLL) is removed in mature form.

The protein belongs to the ponticulin family. The GPI-like-anchor contains a phosphoceramide group, rather than a phosphatidyl group.

It is found in the cell membrane. Binds F-actin and nucleates actin assembly. This is Ponticulin-like protein M (ponM) from Dictyostelium discoideum (Social amoeba).